The chain runs to 113 residues: Large ribosomal subunit protein bL19 (113 aa).

It belongs to the bacterial ribosomal protein bL19 family.

This protein is located at the 30S-50S ribosomal subunit interface and may play a role in the structure and function of the aminoacyl-tRNA binding site. In Mycobacterium leprae (strain Br4923), this protein is Large ribosomal subunit protein bL19.